Reading from the N-terminus, the 276-residue chain is Phosphatidylglycerol--prolipoprotein diacylglyceryl transferase (276 aa).

7 consecutive transmembrane segments (helical) span residues 17–37 (LAIRWYGLMYLAGFIMFLWFG), 59–79 (MLFFGVMGVILGGRLGYVLFY), 95–115 (WEGGMAFHGGFLGVLVAMWLF), 129–149 (FIAPMIPCGLAAGRIGNFING), 176–196 (SQLYQFAGEGVALFIILWLFA), 202–222 (MGAVSGVFLIGYGGFRFAAEF), and 237–257 (LSMGQWLSLPMILIGIAMVVW). Arginine 142 provides a ligand contact to a 1,2-diacyl-sn-glycero-3-phospho-(1'-sn-glycerol).

The protein belongs to the Lgt family.

Its subcellular location is the cell inner membrane. The enzyme catalyses L-cysteinyl-[prolipoprotein] + a 1,2-diacyl-sn-glycero-3-phospho-(1'-sn-glycerol) = an S-1,2-diacyl-sn-glyceryl-L-cysteinyl-[prolipoprotein] + sn-glycerol 1-phosphate + H(+). It functions in the pathway protein modification; lipoprotein biosynthesis (diacylglyceryl transfer). Its function is as follows. Catalyzes the transfer of the diacylglyceryl group from phosphatidylglycerol to the sulfhydryl group of the N-terminal cysteine of a prolipoprotein, the first step in the formation of mature lipoproteins. This chain is Phosphatidylglycerol--prolipoprotein diacylglyceryl transferase, found in Cupriavidus pinatubonensis (strain JMP 134 / LMG 1197) (Cupriavidus necator (strain JMP 134)).